Reading from the N-terminus, the 46-residue chain is Cuticle protein 4.9 (46 aa).

In terms of biological role, component of the cuticle of migratory locust which contains more than 100 different structural proteins. The sequence is that of Cuticle protein 4.9 from Locusta migratoria (Migratory locust).